The following is a 195-amino-acid chain: MDPKEKKTKQEEELKVDDIQDTVEGQSQNEEATEATEPLTAEEKLEKELKEAQAQIEDQKDKYLRLSAEFDNYRKRTVKEKAELILNGGEKSIKSILPVIDDMERALTTMETATDVNAVKEGVELIYNKFLSILSQDGVKVIETKDQPLDTDYHEAIAVIPAPTEEQKGKILDCVQTGYTLNGKVIRHAKVVVGE.

A compositionally biased stretch (basic and acidic residues) spans methionine 1–aspartate 18. The segment at methionine 1–alanine 41 is disordered.

The protein belongs to the GrpE family. Homodimer.

Its subcellular location is the cytoplasm. Participates actively in the response to hyperosmotic and heat shock by preventing the aggregation of stress-denatured proteins, in association with DnaK and GrpE. It is the nucleotide exchange factor for DnaK and may function as a thermosensor. Unfolded proteins bind initially to DnaJ; upon interaction with the DnaJ-bound protein, DnaK hydrolyzes its bound ATP, resulting in the formation of a stable complex. GrpE releases ADP from DnaK; ATP binding to DnaK triggers the release of the substrate protein, thus completing the reaction cycle. Several rounds of ATP-dependent interactions between DnaJ, DnaK and GrpE are required for fully efficient folding. The polypeptide is Protein GrpE (Bacteroides fragilis (strain ATCC 25285 / DSM 2151 / CCUG 4856 / JCM 11019 / LMG 10263 / NCTC 9343 / Onslow / VPI 2553 / EN-2)).